Here is a 929-residue protein sequence, read N- to C-terminus: Ras guanine nucleotide exchange factor M (929 aa).

Residues 1–15 (MWQKPSLTKSMMNEV) are compositionally biased toward polar residues. Disordered regions lie at residues 1–102 (MWQK…AAGS) and 169–316 (TNNN…SKSL). Residues 16-33 (SSNSPKSPTLTSSPSTQS) show a composition bias toward low complexity. Over residues 44–67 (LDGGGGGSNRLIFGGSGGGSGGGS) the composition is skewed to gly residues. Composition is skewed to low complexity over residues 68-80 (LPSSPVSSPVNPF) and 169-191 (TNNNTTTTTNTNNSNNNNSNNDG). Residues 192–202 (SGSGSGAGGSF) show a composition bias toward gly residues. Residues 203–246 (IGTTTSAKTTSTTSTSAATTTTTTTTSSSSSSPSSSSPSSTSPT) show a composition bias toward low complexity. Residues 247–256 (IASNNDNNNK) show a composition bias toward polar residues. Over residues 270 to 287 (PPLTLSQSQTQQQQQQKV) the composition is skewed to low complexity. Over residues 295–305 (RFSTNSSGSQS) the composition is skewed to polar residues. The N-terminal Ras-GEF domain occupies 390 to 528 (NKFVVVSGPK…PILDLYEKLK (139 aa)). Residues 540-583 (SLSGSGGISNNNNGSDLKNSNNGNNSSNNNNSSSNSSSSSSSSD) are disordered. One can recognise a Ras-GEF domain in the interval 676–911 (SPQDIAKQLT…YAFSKFIESP (236 aa)).

Promotes the exchange of Ras-bound GDP by GTP. This chain is Ras guanine nucleotide exchange factor M (gefM), found in Dictyostelium discoideum (Social amoeba).